Reading from the N-terminus, the 122-residue chain is UPF0382 membrane protein SERP0230 (122 aa).

Transmembrane regions (helical) follow at residues Val3–Ala23, Met46–Val66, Ala69–Leu89, and Ile98–Leu118.

Belongs to the UPF0382 family.

It is found in the cell membrane. The polypeptide is UPF0382 membrane protein SERP0230 (Staphylococcus epidermidis (strain ATCC 35984 / DSM 28319 / BCRC 17069 / CCUG 31568 / BM 3577 / RP62A)).